Reading from the N-terminus, the 381-residue chain is Cytochrome b (381 aa).

4 helical membrane-spanning segments follow: residues 34-54, 78-99, 114-134, and 179-199; these read FGSL…FLAM, WLIR…YLHI, WNIG…GYVL, and FFAF…IHLL. 2 residues coordinate heme b: histidine 84 and histidine 98. 2 residues coordinate heme b: histidine 183 and histidine 197. Position 202 (histidine 202) interacts with a ubiquinone. 4 consecutive transmembrane segments (helical) span residues 227-247, 289-309, 321-341, and 348-368; these read YKDI…TLFI, LGGV…PLLQ, MTQI…WIGG, and FIMV…IIIP.

Belongs to the cytochrome b family. The cytochrome bc1 complex contains 3 respiratory subunits (MT-CYB, CYC1 and UQCRFS1), 2 core proteins (UQCRC1 and UQCRC2) and probably 6 low-molecular weight proteins. The cofactor is heme b.

Its subcellular location is the mitochondrion inner membrane. Component of the ubiquinol-cytochrome c reductase complex (complex III or cytochrome b-c1 complex) that is part of the mitochondrial respiratory chain. The b-c1 complex mediates electron transfer from ubiquinol to cytochrome c. Contributes to the generation of a proton gradient across the mitochondrial membrane that is then used for ATP synthesis. The chain is Cytochrome b (mt-cyb) from Galeocerdo cuvier (Tiger shark).